The sequence spans 394 residues: Large ribosomal subunit protein mL44 (394 aa).

A mitochondrion-targeting transit peptide spans 1-21; it reads MFRHVAQNLGSRNTSIQSYRL.

It belongs to the ribonuclease III family. Mitochondrion-specific ribosomal protein mL44 subfamily. As to quaternary structure, component of the mitochondrial large ribosomal subunit (mt-LSU).

The protein resides in the mitochondrion. Its function is as follows. Component of the mitochondrial ribosome. May have a function in the assembly/stability of nascent mitochondrial polypeptides exiting the ribosome. The protein is Large ribosomal subunit protein mL44 of Caenorhabditis elegans.